Consider the following 185-residue polypeptide: Probable chorismate pyruvate-lyase 1 (185 aa).

Residues Arg68, Leu106, and Glu164 each coordinate substrate.

Belongs to the UbiC family.

The protein localises to the cytoplasm. It carries out the reaction chorismate = 4-hydroxybenzoate + pyruvate. The protein operates within cofactor biosynthesis; ubiquinone biosynthesis. In terms of biological role, removes the pyruvyl group from chorismate, with concomitant aromatization of the ring, to provide 4-hydroxybenzoate (4HB) for the ubiquinone pathway. This Pseudomonas entomophila (strain L48) protein is Probable chorismate pyruvate-lyase 1.